Here is a 176-residue protein sequence, read N- to C-terminus: NAD(P)H-quinone oxidoreductase subunit 6, chloroplastic (176 aa).

5 helical membrane passes run 10–30 (FLLV…VLLT), 32–52 (PIYS…FYIL), 61–81 (AQLL…VMFM), 92–112 (LWTL…LSLI), and 152–172 (FFLP…GAIA).

Belongs to the complex I subunit 6 family. NDH is composed of at least 16 different subunits, 5 of which are encoded in the nucleus.

It is found in the plastid. It localises to the chloroplast thylakoid membrane. It catalyses the reaction a plastoquinone + NADH + (n+1) H(+)(in) = a plastoquinol + NAD(+) + n H(+)(out). The enzyme catalyses a plastoquinone + NADPH + (n+1) H(+)(in) = a plastoquinol + NADP(+) + n H(+)(out). Its function is as follows. NDH shuttles electrons from NAD(P)H:plastoquinone, via FMN and iron-sulfur (Fe-S) centers, to quinones in the photosynthetic chain and possibly in a chloroplast respiratory chain. The immediate electron acceptor for the enzyme in this species is believed to be plastoquinone. Couples the redox reaction to proton translocation, and thus conserves the redox energy in a proton gradient. The polypeptide is NAD(P)H-quinone oxidoreductase subunit 6, chloroplastic (ndhG) (Pelargonium hortorum (Common geranium)).